The primary structure comprises 164 residues: Endoribonuclease YbeY (164 aa).

The Zn(2+) site is built by His117, His121, and His127.

Belongs to the endoribonuclease YbeY family. It depends on Zn(2+) as a cofactor.

The protein resides in the cytoplasm. Its function is as follows. Single strand-specific metallo-endoribonuclease involved in late-stage 70S ribosome quality control and in maturation of the 3' terminus of the 16S rRNA. The chain is Endoribonuclease YbeY from Mycoplasma mycoides subsp. mycoides SC (strain CCUG 32753 / NCTC 10114 / PG1).